The following is a 1077-amino-acid chain: ATP-dependent helicase/deoxyribonuclease subunit B (1077 aa).

The protein belongs to the helicase family. AddB/RexB type 2 subfamily. In terms of assembly, heterodimer of AddA and RexB. Mg(2+) serves as cofactor.

Its function is as follows. The heterodimer acts as both an ATP-dependent DNA helicase and an ATP-dependent, dual-direction single-stranded exonuclease. Recognizes the chi site generating a DNA molecule suitable for the initiation of homologous recombination. This subunit has 5' -&gt; 3' nuclease activity but not helicase activity. The protein is ATP-dependent helicase/deoxyribonuclease subunit B of Streptococcus agalactiae serotype III (strain NEM316).